Consider the following 395-residue polypeptide: Xylose isomerase (395 aa).

Active-site residues include H54 and D57. Residues E181, E217, H220, D245, D255, D257, and D293 each coordinate Mg(2+).

This sequence belongs to the xylose isomerase family. As to quaternary structure, homotetramer. Mg(2+) is required as a cofactor.

It is found in the cytoplasm. It carries out the reaction alpha-D-xylose = alpha-D-xylulofuranose. This chain is Xylose isomerase, found in Arthrobacter sp. (strain FB24).